Consider the following 278-residue polypeptide: Undecaprenyl-diphosphatase 1 (278 aa).

7 helical membrane-spanning segments follow: residues 1–21, 43–63, 83–103, 112–132, 192–212, 224–244, and 257–277; these read MFFG…TEFL, AFTT…VVLL, IWAT…IGFL, LMNW…FIFI, FSFF…IGSY, IVIL…VIKW, and FGWY…IGII.

It belongs to the UppP family.

The protein localises to the cell membrane. It carries out the reaction di-trans,octa-cis-undecaprenyl diphosphate + H2O = di-trans,octa-cis-undecaprenyl phosphate + phosphate + H(+). In terms of biological role, catalyzes the dephosphorylation of undecaprenyl diphosphate (UPP). Confers resistance to bacitracin. The protein is Undecaprenyl-diphosphatase 1 of Oenococcus oeni (strain ATCC BAA-331 / PSU-1).